A 140-amino-acid polypeptide reads, in one-letter code: Nucleoside diphosphate kinase (140 aa).

6 residues coordinate ATP: Lys-11, Phe-59, Arg-87, Thr-93, Arg-104, and Asn-114. The Pros-phosphohistidine intermediate role is filled by His-117.

The protein belongs to the NDK family. Homotetramer. Mg(2+) serves as cofactor.

It localises to the cytoplasm. The catalysed reaction is a 2'-deoxyribonucleoside 5'-diphosphate + ATP = a 2'-deoxyribonucleoside 5'-triphosphate + ADP. The enzyme catalyses a ribonucleoside 5'-diphosphate + ATP = a ribonucleoside 5'-triphosphate + ADP. Its function is as follows. Major role in the synthesis of nucleoside triphosphates other than ATP. The ATP gamma phosphate is transferred to the NDP beta phosphate via a ping-pong mechanism, using a phosphorylated active-site intermediate. In Erythrobacter litoralis (strain HTCC2594), this protein is Nucleoside diphosphate kinase.